Consider the following 393-residue polypeptide: Transcription factor bHLH112 (393 aa).

2 disordered regions span residues 248–277 (TRAQ…SPLP) and 332–356 (KQGA…NENH). Residues 254–265 (SLKRAKDNESAA) show a composition bias toward basic and acidic residues. The region spanning 270–319 (VTTPSPLPTFKVRKENLRDQITSLQQLVSPFGKTDTASVLQEAIEYIKFL) is the bHLH domain. Residues 332-347 (KQGASNQQQQQISGKS) show a composition bias toward low complexity.

As to quaternary structure, homodimer.

The protein localises to the nucleus. This chain is Transcription factor bHLH112 (BHLH112), found in Arabidopsis thaliana (Mouse-ear cress).